Here is a 512-residue protein sequence, read N- to C-terminus: ATP synthase subunit alpha (512 aa).

Residue 169 to 176 (GDRQTGKT) participates in ATP binding.

Belongs to the ATPase alpha/beta chains family. In terms of assembly, F-type ATPases have 2 components, CF(1) - the catalytic core - and CF(0) - the membrane proton channel. CF(1) has five subunits: alpha(3), beta(3), gamma(1), delta(1), epsilon(1). CF(0) has three main subunits: a(1), b(2) and c(9-12). The alpha and beta chains form an alternating ring which encloses part of the gamma chain. CF(1) is attached to CF(0) by a central stalk formed by the gamma and epsilon chains, while a peripheral stalk is formed by the delta and b chains.

Its subcellular location is the cell inner membrane. The catalysed reaction is ATP + H2O + 4 H(+)(in) = ADP + phosphate + 5 H(+)(out). Its function is as follows. Produces ATP from ADP in the presence of a proton gradient across the membrane. The alpha chain is a regulatory subunit. The polypeptide is ATP synthase subunit alpha (Orientia tsutsugamushi (strain Boryong) (Rickettsia tsutsugamushi)).